The chain runs to 408 residues: Imidazolonepropionase (408 aa).

Fe(3+) contacts are provided by His-73 and His-75. Residues His-73 and His-75 each contribute to the Zn(2+) site. The 4-imidazolone-5-propanoate site is built by Arg-82, Tyr-145, and His-178. Tyr-145 lines the N-formimidoyl-L-glutamate pocket. Residue His-243 participates in Fe(3+) binding. A Zn(2+)-binding site is contributed by His-243. Gln-246 is a 4-imidazolone-5-propanoate binding site. Residue Asp-318 participates in Fe(3+) binding. Asp-318 contacts Zn(2+). Residues Asn-320 and Gly-322 each contribute to the N-formimidoyl-L-glutamate site. 4-imidazolone-5-propanoate is bound at residue Ser-323.

The protein belongs to the metallo-dependent hydrolases superfamily. HutI family. It depends on Zn(2+) as a cofactor. Fe(3+) is required as a cofactor.

It localises to the cytoplasm. The enzyme catalyses 4-imidazolone-5-propanoate + H2O = N-formimidoyl-L-glutamate. It participates in amino-acid degradation; L-histidine degradation into L-glutamate; N-formimidoyl-L-glutamate from L-histidine: step 3/3. In terms of biological role, catalyzes the hydrolytic cleavage of the carbon-nitrogen bond in imidazolone-5-propanoate to yield N-formimidoyl-L-glutamate. It is the third step in the universal histidine degradation pathway. The sequence is that of Imidazolonepropionase from Shewanella loihica (strain ATCC BAA-1088 / PV-4).